The chain runs to 387 residues: ATP phosphoribosyltransferase regulatory subunit (387 aa).

This sequence belongs to the class-II aminoacyl-tRNA synthetase family. HisZ subfamily. In terms of assembly, heteromultimer composed of HisG and HisZ subunits.

It localises to the cytoplasm. Its pathway is amino-acid biosynthesis; L-histidine biosynthesis; L-histidine from 5-phospho-alpha-D-ribose 1-diphosphate: step 1/9. In terms of biological role, required for the first step of histidine biosynthesis. May allow the feedback regulation of ATP phosphoribosyltransferase activity by histidine. In Psychrobacter cryohalolentis (strain ATCC BAA-1226 / DSM 17306 / VKM B-2378 / K5), this protein is ATP phosphoribosyltransferase regulatory subunit.